The primary structure comprises 719 residues: MVERIINSEDISLLISGRQSNPHKFLGIISESSSQDRIILFRPGAHFVAIELQGNIAQATHHHSGIFSLVTPKGTLPHDYRIYHQNGLLAHDPYAFSPLWGEMDSFLFHQGTHYKIYERMGAIPCDVGGILGVLFVVWAPHAQRVSVVGDFNYWNGLVNPLRKVSDSGVWELFIPGLDEGTLYKWELVTASGEVLIKTDPYGKGFDIPPQVTSRVINSDRYTWHDQKWMENRKNTKDQPLAIYEVHVGSWQWDNGRPLGYRELAKRLAQYCKELHYTHVELLPITEHPLNESWGYQVTGYYAPTWRYGSFQDFQFFVDHLHCEGIGVILDWVPGHFPTDSFALASFDGEALYESVDHKDPLHPHWHTYTFDYRCSEVVNFLIGSALFWLDKMHIDGLRVDAVTSMLYLDYGRKAGEWSPNIYGGNENLDAIEFIKHFNSVVHREFPAVLTFAEESTDFPKVTESVDSGGLGFDYKWNLGWMHDTFRYIKVDPIFRSYHHNDLTFSLWYAFNERYLLPLSHDEVVHGKGSLLQKIPGDTWTKFAHMRLLLSYQICQPGKKLVFMGGEFAQWKEWSPDNSLDWHLLDNPYHASLHKCVAKMNALYCELPYFWKGDHKQESFLWVDFKDTKNNVISYYRFSGEDRSSALLCIHHFSSEYFPSYVLHCQGIKTCELLFNSDDISFGGSGKGNRLPILCVDHNIPWGIAIELPPLATLIFQVSF.

Asp-400 (nucleophile) is an active-site residue. The active-site Proton donor is the Glu-453.

This sequence belongs to the glycosyl hydrolase 13 family. GlgB subfamily. As to quaternary structure, monomer.

The catalysed reaction is Transfers a segment of a (1-&gt;4)-alpha-D-glucan chain to a primary hydroxy group in a similar glucan chain.. Its pathway is glycan biosynthesis; glycogen biosynthesis. Its function is as follows. Catalyzes the formation of the alpha-1,6-glucosidic linkages in glycogen by scission of a 1,4-alpha-linked oligosaccharide from growing alpha-1,4-glucan chains and the subsequent attachment of the oligosaccharide to the alpha-1,6 position. The polypeptide is 1,4-alpha-glucan branching enzyme GlgB (Chlamydia caviae (strain ATCC VR-813 / DSM 19441 / 03DC25 / GPIC) (Chlamydophila caviae)).